The sequence spans 257 residues: MDRIIEKLESGWWIVSHEQKLWLPYGELPHGLAANFDLVGQRALRIGEWQGEPVWLVLQHRRHDMGSVRQVIDQDAGLFQLAGRGVQLAEFYRSHKFCGYCGHPMHPSKTEWAMLCSHCRERYYPQIAPCIIVAIRREDSILLAQHVRHRNGVHTVLAGFVEVGETLEQAVAREVMEESGIKVKNLRYITSQPWPFPQSLMTAFMAEYDSGEIVIDPKELLEANWYRYDDLPLLPPPGTVARRLIEDTVAMCRAEYD.

R69 lines the substrate pocket. Residues C98 and C101 each coordinate Zn(2+). E111 lines the substrate pocket. 2 residues coordinate Zn(2+): C116 and C119. Residue Y124 coordinates substrate. One can recognise a Nudix hydrolase domain in the interval 125–248 (PQIAPCIIVA…TVARRLIEDT (124 aa)). The a divalent metal cation site is built by A158, E174, and E178. Positions 159–180 (GFVEVGETLEQAVAREVMEESG) match the Nudix box motif. 192–199 (QPWPFPQS) serves as a coordination point for substrate. E219 serves as a coordination point for a divalent metal cation. A241 contacts substrate.

This sequence belongs to the Nudix hydrolase family. NudC subfamily. Homodimer. The cofactor is Mg(2+). Requires Mn(2+) as cofactor. Zn(2+) is required as a cofactor.

The enzyme catalyses a 5'-end NAD(+)-phospho-ribonucleoside in mRNA + H2O = a 5'-end phospho-adenosine-phospho-ribonucleoside in mRNA + beta-nicotinamide D-ribonucleotide + 2 H(+). It carries out the reaction NAD(+) + H2O = beta-nicotinamide D-ribonucleotide + AMP + 2 H(+). The catalysed reaction is NADH + H2O = reduced beta-nicotinamide D-ribonucleotide + AMP + 2 H(+). Its function is as follows. mRNA decapping enzyme that specifically removes the nicotinamide adenine dinucleotide (NAD) cap from a subset of mRNAs by hydrolyzing the diphosphate linkage to produce nicotinamide mononucleotide (NMN) and 5' monophosphate mRNA. The NAD-cap is present at the 5'-end of some mRNAs and stabilizes RNA against 5'-processing. Has preference for mRNAs with a 5'-end purine. Catalyzes the hydrolysis of a broad range of dinucleotide pyrophosphates. In Salmonella agona (strain SL483), this protein is NAD-capped RNA hydrolase NudC.